A 195-amino-acid polypeptide reads, in one-letter code: HTH-type transcriptional regulator BetI (195 aa).

An HTH tetR-type domain is found at 8–68 (SIRRRQLIDA…ATMRDITSQL (61 aa)). The segment at residues 31 to 50 (TIAQIARRAGVSTGIISHYF) is a DNA-binding region (H-T-H motif).

It participates in amine and polyamine biosynthesis; betaine biosynthesis via choline pathway [regulation]. In terms of biological role, repressor involved in the biosynthesis of the osmoprotectant glycine betaine. It represses transcription of the choline transporter BetT and the genes of BetAB involved in the synthesis of glycine betaine. The polypeptide is HTH-type transcriptional regulator BetI (Escherichia coli O17:K52:H18 (strain UMN026 / ExPEC)).